A 759-amino-acid polypeptide reads, in one-letter code: 5-methyltetrahydropteroyltriglutamate--homocysteine methyltransferase (759 aa).

5-methyltetrahydropteroyltri-L-glutamate is bound by residues 17–20 (RELK) and Lys116. L-homocysteine-binding positions include 430–432 (IGS) and Glu483. L-methionine-binding positions include 430 to 432 (IGS) and Glu483. 5-methyltetrahydropteroyltri-L-glutamate contacts are provided by residues 514–515 (RC) and Trp560. Asp598 lines the L-homocysteine pocket. Asp598 is an L-methionine binding site. Residue Glu604 coordinates 5-methyltetrahydropteroyltri-L-glutamate. His641, Cys643, and Glu665 together coordinate Zn(2+). The active-site Proton donor is His694. Cys726 serves as a coordination point for Zn(2+).

The protein belongs to the vitamin-B12 independent methionine synthase family. It depends on Zn(2+) as a cofactor.

It catalyses the reaction 5-methyltetrahydropteroyltri-L-glutamate + L-homocysteine = tetrahydropteroyltri-L-glutamate + L-methionine. The protein operates within amino-acid biosynthesis; L-methionine biosynthesis via de novo pathway; L-methionine from L-homocysteine (MetE route): step 1/1. Its function is as follows. Catalyzes the transfer of a methyl group from 5-methyltetrahydrofolate to homocysteine resulting in methionine formation. The chain is 5-methyltetrahydropteroyltriglutamate--homocysteine methyltransferase from Lactococcus lactis subsp. lactis (strain IL1403) (Streptococcus lactis).